We begin with the raw amino-acid sequence, 347 residues long: ATPase GET3 (347 aa).

26–33 (KGGVGKTT) serves as a coordination point for ATP. Residue Asp-57 is part of the active site. Positions 240 and 267 each coordinate ATP. Residues Cys-279 and Cys-282 each coordinate Zn(2+).

It belongs to the arsA ATPase family. Homodimer. Component of the Golgi to ER traffic (GET) complex, which is composed of GET1, GET2 and GET3. Within the complex, GET1 and GET2 form a heterotetramer which is stabilized by phosphatidylinositol binding and which binds to the GET3 homodimer. Interacts with the chloride channel protein GEF1.

It is found in the cytoplasm. The protein localises to the endoplasmic reticulum. Its subcellular location is the golgi apparatus. Its function is as follows. ATPase required for the post-translational delivery of tail-anchored (TA) proteins to the endoplasmic reticulum. Recognizes and selectively binds the transmembrane domain of TA proteins in the cytosol. This complex then targets to the endoplasmic reticulum by membrane-bound receptors GET1 and GET2, where the tail-anchored protein is released for insertion. This process is regulated by ATP binding and hydrolysis. ATP binding drives the homodimer towards the closed dimer state, facilitating recognition of newly synthesized TA membrane proteins. ATP hydrolysis is required for insertion. Subsequently, the homodimer reverts towards the open dimer state, lowering its affinity for the GET1-GET2 receptor, and returning it to the cytosol to initiate a new round of targeting. Cooperates with the HDEL receptor ERD2 to mediate the ATP-dependent retrieval of resident ER proteins that contain a C-terminal H-D-E-L retention signal from the Golgi to the ER. Involved in low-level resistance to the oxyanions arsenite and arsenate, and in heat tolerance. The chain is ATPase GET3 from Scheffersomyces stipitis (strain ATCC 58785 / CBS 6054 / NBRC 10063 / NRRL Y-11545) (Yeast).